The following is a 617-amino-acid chain: Putative metal ion transporter C17A12.14 (617 aa).

The segment at 1-141 is disordered; it reads MPSNTSRSVP…GKNTRDQPSP (141 aa). Position 105 is a phosphoserine (serine 105). Basic and acidic residues predominate over residues 117–136; it reads SHPEDIQRKEFETENGKNTR. A phosphoserine mark is found at serine 152, serine 162, serine 226, and serine 241. Transmembrane regions (helical) follow at residues 560–580 and 590–610; these read TILG…GMNV and LGWF…SFIL.

It belongs to the CorA metal ion transporter (MIT) (TC 1.A.35) family. Interacts with sad1.

The protein localises to the membrane. This Schizosaccharomyces pombe (strain 972 / ATCC 24843) (Fission yeast) protein is Putative metal ion transporter C17A12.14.